Here is a 383-residue protein sequence, read N- to C-terminus: Sphingosine kinase 1 (383 aa).

The region spanning 12–159 (PRPCRVLVLL…MNLLSLHTAS (148 aa)) is the DAGKc domain. Residues 22-24 (NPR) and 54-58 (TERQN) contribute to the ATP site. Residue 79–82 (SGDG) participates in substrate binding. Residue Asp-81 is the Proton donor/acceptor of the active site. ATP contacts are provided by residues Glu-86 and 111 to 113 (GSG). Short sequence motifs (nuclear export signal) lie at residues 147-155 (LSPMNLLSL) and 161-169 (RQLYSVLSL). Asp-178 contacts substrate. The ATP site is built by Arg-185 and Arg-191. Residue Thr-193 is modified to Phosphothreonine. Ser-225 carries the phosphoserine modification. 340–342 (DGE) contacts ATP. The disordered stretch occupies residues 363–383 (GSSDSPSGRDSQRRPPPEEPI). Over residues 372-383 (DSQRRPPPEEPI) the composition is skewed to basic and acidic residues.

As to quaternary structure, interacts with ACY1. Binds to calmodulin. Interacts with SPHKAP. Interacts with CIB1, the interaction occurs in a calcium-dependent manner. Interacts with TRAF2. Interacts with EEF1A1; the interaction enhances SPHK1 kinase activity. Mg(2+) serves as cofactor. As to expression, expressed in microglia (at protein level).

The protein resides in the cytoplasm. It localises to the nucleus. Its subcellular location is the cell membrane. It is found in the endosome membrane. The protein localises to the membrane. The protein resides in the clathrin-coated pit. It localises to the synapse. The catalysed reaction is a sphingoid base + ATP = a sphingoid 1-phosphate + ADP + H(+). The enzyme catalyses L-seryl-[protein] + acetyl-CoA = O-acetyl-L-seryl-[protein] + CoA. It carries out the reaction sphinganine + ATP = sphinganine 1-phosphate + ADP + H(+). It catalyses the reaction sphing-4-enine + ATP = sphing-4-enine 1-phosphate + ADP + H(+). The catalysed reaction is 1-O-hexadecyl-2-amino-sn-glycerol + ATP = 1-O-hexadecyl-2-desoxy-2-amino-sn-glycero-3-phosphate + ADP + H(+). Its activity is regulated as follows. Acetyltransferase activity increases in presence of the kinase substrate, sphingosine. In Purkinje cells, kinase activity on sphingosine increases in presence of VEGFA. In neurons, kinase activity increases during the first 24h in presence of Amyloid-beta protein 42 to decrease after 96h. In terms of biological role, catalyzes the phosphorylation of sphingosine to form sphingosine 1-phosphate (SPP), a lipid mediator with both intra- and extracellular functions. Also acts on D-erythro-sphingosine and to a lesser extent sphinganine, but not other lipids, such as D,L-threo-dihydrosphingosine, N,N-dimethylsphingosine, diacylglycerol, ceramide, or phosphatidylinositol. In contrast to proapoptotic SPHK2, has a negative effect on intracellular ceramide levels, enhances cell growth and inhibits apoptosis. Involved in the regulation of inflammatory response and neuroinflammation. Via the product sphingosine 1-phosphate, stimulates TRAF2 E3 ubiquitin ligase activity, and promotes activation of NF-kappa-B in response to TNF signaling leading to IL17 secretion. In response to TNF and in parallel to NF-kappa-B activation, negatively regulates RANTES induction through p38 MAPK signaling pathway. Involved in endocytic membrane trafficking induced by sphingosine, recruited to dilate endosomes, also plays a role on later stages of endosomal maturation and membrane fusion independently of its kinase activity. In Purkinje cells, seems to be also involved in the regulation of autophagosome-lysosome fusion upon VEGFA. Its function is as follows. Has serine acetyltransferase activity on PTGS2/COX2 in an acetyl-CoA dependent manner. The acetyltransferase activity increases in presence of the kinase substrate, sphingosine. During neuroinflammation, through PTGS2 acetylation, promotes neuronal secretion of specialized preresolving mediators (SPMs), especially 15-R-lipoxin A4, which results in an increase of phagocytic microglia. In Rattus norvegicus (Rat), this protein is Sphingosine kinase 1 (Sphk1).